The sequence spans 336 residues: MADIWTDYGVPGAIIVAQILALMVPILVSVAFLVYAERKVLGLMQLRQGPNMVGPWGILQSFADALKMIGKETIIPAGANRIIFLAAPMLTMMLALAAWAVIPFGEGLVISDINVGILYLLAISSQGVYGIIMAGWASNSKYAFLGGLRSAAQMVSYEVSIGLVIITVLLCVGSLNLSDVVEAQKTVWFAIPLLPMFVIFFISALAETNRAPFDLPEGESELVGGFHTEYSGMAFGLFFLGEYANMILMSAMTSVLFLGGWLPPLDVAPLNWVPGPIWFILKICFCLFLFVWVRATVPRYRYDQLMRLGWKVFLPFSLVWVILTAGVLVTFDWLPK.

8 consecutive transmembrane segments (helical) span residues isoleucine 14–valine 34, isoleucine 82–isoleucine 102, valine 115–glycine 135, isoleucine 161–valine 181, threonine 186–alanine 206, isoleucine 247–valine 267, valine 273–valine 293, and valine 312–aspartate 332.

It belongs to the complex I subunit 1 family. As to quaternary structure, NDH-1 is composed of 14 different subunits. Subunits NuoA, H, J, K, L, M, N constitute the membrane sector of the complex.

It is found in the cell inner membrane. It catalyses the reaction a quinone + NADH + 5 H(+)(in) = a quinol + NAD(+) + 4 H(+)(out). Its function is as follows. NDH-1 shuttles electrons from NADH, via FMN and iron-sulfur (Fe-S) centers, to quinones in the respiratory chain. The immediate electron acceptor for the enzyme in this species is believed to be ubiquinone. Couples the redox reaction to proton translocation (for every two electrons transferred, four hydrogen ions are translocated across the cytoplasmic membrane), and thus conserves the redox energy in a proton gradient. This subunit may bind ubiquinone. The polypeptide is NADH-quinone oxidoreductase subunit H (Rhodospirillum centenum (strain ATCC 51521 / SW)).